The chain runs to 469 residues: Putative dipeptidase SH1171 (469 aa).

Position 84 (histidine 84) interacts with Zn(2+). Residue aspartate 86 is part of the active site. Aspartate 115 contacts Zn(2+). Residue glutamate 149 is the Proton acceptor of the active site. Zn(2+) is bound by residues glutamate 150, aspartate 173, and histidine 440.

Belongs to the peptidase M20A family. Zn(2+) serves as cofactor.

The protein is Putative dipeptidase SH1171 of Staphylococcus haemolyticus (strain JCSC1435).